Reading from the N-terminus, the 439-residue chain is Adenylosuccinate synthetase (439 aa).

GTP-binding positions include 13–19 (GDEGKGK) and 41–43 (GHT). Asp-14 acts as the Proton acceptor in catalysis. Asp-14 and Gly-41 together coordinate Mg(2+). IMP-binding positions include 14–17 (DEGK), 39–42 (NAGH), Thr-130, Arg-144, Gln-226, Thr-241, and Arg-313. His-42 functions as the Proton donor in the catalytic mechanism. 309 to 315 (ASTGRQR) is a substrate binding site. GTP is bound by residues Arg-315, 341–343 (KLD), and 422–424 (STG).

This sequence belongs to the adenylosuccinate synthetase family. As to quaternary structure, homodimer. Mg(2+) serves as cofactor.

The protein localises to the cytoplasm. The enzyme catalyses IMP + L-aspartate + GTP = N(6)-(1,2-dicarboxyethyl)-AMP + GDP + phosphate + 2 H(+). The protein operates within purine metabolism; AMP biosynthesis via de novo pathway; AMP from IMP: step 1/2. Plays an important role in the de novo pathway of purine nucleotide biosynthesis. Catalyzes the first committed step in the biosynthesis of AMP from IMP. The sequence is that of Adenylosuccinate synthetase from Acinetobacter baylyi (strain ATCC 33305 / BD413 / ADP1).